The following is a 190-amino-acid chain: Ubiquinol-cytochrome c reductase iron-sulfur subunit (190 aa).

Residues 18 to 39 form a helical membrane-spanning segment; that stretch reads FLYYATAGAGTVAAGAAAWTLV. The 94-residue stretch at 95 to 188 folds into the Rieske domain; sequence GQLIDRSAQN…AEFLDDTTIK (94 aa). Positions 132, 134, 152, and 155 each coordinate [2Fe-2S] cluster. Cys-137 and Cys-154 are oxidised to a cystine.

It belongs to the Rieske iron-sulfur protein family. The main subunits of complex b-c1 are: cytochrome b, cytochrome c1 and the Rieske protein. [2Fe-2S] cluster is required as a cofactor.

It localises to the cell membrane. The enzyme catalyses a quinol + 2 Fe(III)-[cytochrome c](out) = a quinone + 2 Fe(II)-[cytochrome c](out) + 2 H(+)(out). In terms of biological role, component of the ubiquinol-cytochrome c reductase complex (complex III or cytochrome b-c1 complex), which is a respiratory chain that generates an electrochemical potential coupled to ATP synthesis. This Paracoccus denitrificans protein is Ubiquinol-cytochrome c reductase iron-sulfur subunit (petA).